The sequence spans 334 residues: N-acetyl-gamma-glutamyl-phosphate reductase (334 aa).

The active site involves cysteine 154.

The protein belongs to the NAGSA dehydrogenase family. Type 1 subfamily.

The protein resides in the cytoplasm. The catalysed reaction is N-acetyl-L-glutamate 5-semialdehyde + phosphate + NADP(+) = N-acetyl-L-glutamyl 5-phosphate + NADPH + H(+). Its pathway is amino-acid biosynthesis; L-arginine biosynthesis; N(2)-acetyl-L-ornithine from L-glutamate: step 3/4. Its function is as follows. Catalyzes the NADPH-dependent reduction of N-acetyl-5-glutamyl phosphate to yield N-acetyl-L-glutamate 5-semialdehyde. In Buchnera aphidicola subsp. Schizaphis graminum (strain Sg), this protein is N-acetyl-gamma-glutamyl-phosphate reductase.